Consider the following 382-residue polypeptide: MKALHFGAGNIGRGFIGKLLADAGIQLTFADVNQVVLDALNARHSYQVHVVGETEQVDTVSGVNAVSSIGDDVVDLIAQVDLVTTAVGPVVLERIAPAIAKGLVKRKEQGNESPLNIIACENMVRGTTQLKGHVMNALPEDAKAWVEEHVGFVDSAVDRIVPPSASATNDPLEVTVETFSEWIVDKTQFKGALPNIPGMELTDNLMAFVERKLFTLNTGHAITAYLGKLAGHQTIRDAILDEKIRAVVKGAMEESGAVLIKRYGFDADKHAAYIQKILGRFENPYLKDDVERVGRQPLRKLSAGDRLIKPLLGTLEYSLPHKNLIQGIAGAMHFRSEDDPQAQELAALIADKGPQAALAQISGLDANSEVVSEAVTAYKAMQ.

3–14 contributes to the NAD(+) binding site; sequence ALHFGAGNIGRG. The residue at position 269 (lysine 269) is an N6-acetyllysine.

The protein belongs to the mannitol dehydrogenase family.

It catalyses the reaction D-mannitol 1-phosphate + NAD(+) = beta-D-fructose 6-phosphate + NADH + H(+). This is Mannitol-1-phosphate 5-dehydrogenase from Escherichia coli O139:H28 (strain E24377A / ETEC).